The primary structure comprises 1396 residues: DNA-directed RNA polymerase subunit beta' (1396 aa).

Cysteine 73, cysteine 75, cysteine 88, and cysteine 91 together coordinate Zn(2+). Positions 467, 469, and 471 each coordinate Mg(2+). Zn(2+)-binding residues include cysteine 817, cysteine 891, cysteine 898, and cysteine 901.

It belongs to the RNA polymerase beta' chain family. As to quaternary structure, the RNAP catalytic core consists of 2 alpha, 1 beta, 1 beta' and 1 omega subunit. When a sigma factor is associated with the core the holoenzyme is formed, which can initiate transcription. It depends on Mg(2+) as a cofactor. Zn(2+) serves as cofactor.

The catalysed reaction is RNA(n) + a ribonucleoside 5'-triphosphate = RNA(n+1) + diphosphate. Functionally, DNA-dependent RNA polymerase catalyzes the transcription of DNA into RNA using the four ribonucleoside triphosphates as substrates. The polypeptide is DNA-directed RNA polymerase subunit beta' (Orientia tsutsugamushi (strain Ikeda) (Rickettsia tsutsugamushi)).